The chain runs to 85 residues: High-potential iron-sulfur protein (85 aa).

Residues Cys-43, Cys-46, Cys-63, and Cys-77 each coordinate [4Fe-4S] cluster.

This sequence belongs to the high-potential iron-sulfur protein (HiPIP) family. As to quaternary structure, homodimer.

The protein resides in the periplasm. Specific class of high-redox-potential 4Fe-4S ferredoxins. Functions in anaerobic electron transport in most purple and in some other photosynthetic bacteria and in at least one genus (Paracoccus) of halophilic, denitrifying bacteria. This chain is High-potential iron-sulfur protein, found in Allochromatium warmingii (Chromatium warmingii).